The sequence spans 1078 residues: Exportin-1 (1078 aa).

One can recognise an Importin N-terminal domain in the interval 34 to 100 (AQQVLTQFQA…RNYIVAVMIK (67 aa)).

It belongs to the exportin family. As to quaternary structure, interacts with php4.

It is found in the nucleus. Its function is as follows. Receptor for the leucine-rich nuclear export signal (NES). This Schizosaccharomyces pombe (strain 972 / ATCC 24843) (Fission yeast) protein is Exportin-1 (xpo1).